The chain runs to 623 residues: Scarecrow-like protein 22 (623 aa).

Disordered regions lie at residues 62–90 and 179–203; these read RSPS…AAAA and PNPG…QPGS. A compositionally biased stretch (low complexity) spans 63–80; the sequence is SPSPFVSSSTTTLSSSHG. In terms of domain architecture, GRAS spans 235–622; it reads NDQDQSAVII…KELVTVSAWK (388 aa). Residues 242 to 311 form a leucine repeat I (LRI) region; that stretch reads VIIDQLFSAA…ALHSLLQDSS (70 aa). The interval 330-398 is VHIID; the sequence is YRAFSETSPF…SSAPSLKITA (69 aa). Residues 361 to 365 carry the VHIID motif; that stretch reads IHIVD. Positions 413–448 are leucine repeat II (LRII); sequence FTEENLRSFAGETGVSFEIELLNMEILLNPTYWPLS. Positions 458–545 are PFYRE; that stretch reads IAVNLPISSM…RFCVQPSIQK (88 aa). Residues 548–622 form an SAW region; it reads TNRYRWMERS…KELVTVSAWK (75 aa).

It belongs to the GRAS family. In terms of tissue distribution, expressed in seedlings, roots, leaves and flowers.

It localises to the nucleus. Its function is as follows. Probable transcription factor involved in plant development. The polypeptide is Scarecrow-like protein 22 (SCL22) (Arabidopsis thaliana (Mouse-ear cress)).